The following is a 421-amino-acid chain: Cell division protein FtsA (421 aa).

This sequence belongs to the FtsA/MreB family. Self-interacts. Interacts with FtsZ.

Its subcellular location is the cell membrane. Its function is as follows. Cell division protein that is involved in the assembly of the Z ring. May serve as a membrane anchor for the Z ring. The sequence is that of Cell division protein FtsA from Buchnera aphidicola subsp. Baizongia pistaciae (strain Bp).